Here is a 171-residue protein sequence, read N- to C-terminus: T-cell surface glycoprotein CD3 delta chain (171 aa).

The N-terminal stretch at 1–21 is a signal peptide; it reads MEHSTFLSGLVLATLLSQVSP. Topologically, residues 22 to 105 are extracellular; that stretch reads FKIPVEELED…CVELDPATLA (84 aa). Cysteine 37 and cysteine 73 are disulfide-bonded. Asparagine 38, asparagine 54, and asparagine 74 each carry an N-linked (GlcNAc...) asparagine glycan. A helical transmembrane segment spans residues 106–126; it reads GIIVTDVIATLLLALGVFCFA. At 127-171 the chain is on the cytoplasmic side; sequence GHETGRLSGAADTQALLRNDQVYQPLRDRDDAQYSRLGGNWARNK. One can recognise an ITAM domain in the interval 138-166; it reads DTQALLRNDQVYQPLRDRDDAQYSRLGGN. Tyrosine 149 and tyrosine 160 each carry phosphotyrosine.

As to quaternary structure, the TCR-CD3 complex is composed of a CD3D/CD3E and a CD3G/CD3E heterodimers that preferentially associate with TCRalpha and TCRbeta, respectively, to form TCRalpha/CD3E/CD3G and TCRbeta/CD3G/CD3E trimers. In turn, the hexamer interacts with CD3Z homodimer to form the TCR-CD3 complex. Alternatively, TCRalpha and TCRbeta can be replaced by TCRgamma and TCRdelta. Interacts with coreceptors CD4 and CD8. In terms of processing, phosphorylated on Tyr residues after T-cell receptor triggering by LCK in association with CD4/CD8. In terms of tissue distribution, CD3D is mostly present on T-lymphocytes with its TCR-CD3 partners. Present also in fetal NK-cells.

It is found in the cell membrane. Functionally, part of the TCR-CD3 complex present on T-lymphocyte cell surface that plays an essential role in adaptive immune response. When antigen presenting cells (APCs) activate T-cell receptor (TCR), TCR-mediated signals are transmitted across the cell membrane by the CD3 chains CD3D, CD3E, CD3G and CD3Z. All CD3 chains contain immunoreceptor tyrosine-based activation motifs (ITAMs) in their cytoplasmic domain. Upon TCR engagement, these motifs become phosphorylated by Src family protein tyrosine kinases LCK and FYN, resulting in the activation of downstream signaling pathways. In addition of this role of signal transduction in T-cell activation, CD3D plays an essential role in thymocyte differentiation. Indeed, participates in correct intracellular TCR-CD3 complex assembly and surface expression. In absence of a functional TCR-CD3 complex, thymocytes are unable to differentiate properly. Interacts with CD4 and CD8 and thus serves to establish a functional link between the TCR and coreceptors CD4 and CD8, which is needed for activation and positive selection of CD4 or CD8 T-cells. In Macaca fascicularis (Crab-eating macaque), this protein is T-cell surface glycoprotein CD3 delta chain (CD3D).